Consider the following 340-residue polypeptide: Short-chain dehydrogenase/reductase prx1 (340 aa).

The NADP(+) site is built by Ile60, Lys84, Asp104, Asn131, and Lys162. Ser184 serves as the catalytic Proton donor. Residues Tyr210 and Lys214 each contribute to the NADP(+) site. Tyr210 functions as the Proton acceptor in the catalytic mechanism. The active-site Lowers pKa of active site Tyr is the Lys214.

It belongs to the short-chain dehydrogenases/reductases (SDR) family.

It functions in the pathway sesquiterpene biosynthesis. In terms of biological role, short-chain dehydrogenase/reductase; part of the gene cluster that mediates the biosynthesis of PR-toxin, a bicyclic sesquiterpene belonging to the eremophilane class and acting as a mycotoxin. The first step of the pathway is catalyzed by the aristolochene synthase which performs the cyclization of trans,trans-farnesyl diphosphate (FPP) to the bicyclic sesquiterpene aristolochene. Following the formation of aristolochene, the non-oxygenated aristolochene is converted to the trioxygenated intermediate eremofortin B, via 7-epi-neopetasone. This conversion appears to involve three enzymes, a hydroxysterol oxidase-like enzyme, the quinone-oxidase prx3 that forms the quinone-type-structure in the bicyclic nucleus of aristolochene with the C8-oxo group and the C-3 hydroxyl group, and the P450 monooxygenase ORF6 that introduces the epoxide at the double bond between carbons 1 and 2. No monoxy or dioxy-intermediates have been reported to be released to the broth, so these three early oxidative reactions may be coupled together. Eremofortin B is further oxidized by another P450 monooxygenase, that introduces a second epoxide between carbons 7 and 11 prior to acetylation to eremofortin A by the acetyltransferase ORF8. The second epoxidation may be performed by a second P450 monooxygenase. After the acetylation step, eremofortin A is converted to eremofortin C and then to PR-toxin. First the conversion of eremofortin A to eremofortin C proceeds by oxidation of the side chain of the molecule at C-12 and is catalyzed by the short-chain oxidoreductase prx1. The cytochrome P450 monooxygenase ORF6 is probably also involved in this step. The primary alcohol formed at C-12 is finally oxidized by the short-chain alcohol dehydrogenase prx4 that forms PR-toxin. The protein is Short-chain dehydrogenase/reductase prx1 of Penicillium roqueforti (strain FM164).